A 1694-amino-acid chain; its full sequence is MRRPPPLGPTTASGPEGNVRNLQKRQAPGPGAAGGCGPEAGGRRENKQKRRMVARATPGRGEVESDKSVAASGAGKAARRRVEGRRGQVSPSDSSDPRGLEAAKEAELPLQTERHTKEKRKVTEASSDDPQPGLDLVRKESLTSSESFQTVECLQSLGKESIIEGIKRRIRNKKLKSLENPPLKITENEATQNIKVEFQDELYKNTPKYSCNILSPEVENNSVLKLRDCNCFPHSKGCNDENNLPYKPDGGCMHVAENFSKKENLRSLAEKSDTNSIPQLLQTEENVMEVNKLLPEESDLYQSKTNGLLSCLQHEKNKYSIEESSVGRKPRKRMKLSEKADETVTEMNFSNEYNKSELMLQENQMIADGKEAETKSPLNVLRKVSHNTVSLMDHLLSVPETVEKETSSEHHVNAVFQKTIEPLLKEETESTSEPLGYESMASKEDFKSMKSFIGKSPNEYHIERRSSREDLRSASEELNLSCQRTIPMTGKRTWPCYSCARISAWCWKKASLPESSYFFPGSQESYRQVDVPKHQTNQTHLTDSKLLLQSSLTETNTESSSKEKLDSNSNCLSSVSAVEPTLMVIKEPIIKDDKKIKSEELSRSGSEVISNTTEDTQLTSETQSLTGNKKKARGNLMKLNLTATSKDGQEANNSAGKTIHRKACIAQQTFIVPDLVKILNTGRLTNFKIPLLKNKTEKRKEVNAKSSEREAYSPLELLDNLSGADIRQNRSKENVSMTMLGPQTLSIRNSVTPVQASSDSFYNKKSYSISPSFTKQGNNSKPSNHVSEPGNIVSNKEVASLTVENNAFSCDPGYVEKSPSFCCNEQETFRPVSSEVRGRKITKNFSEVGFPDILKAYEDDILLIDVIQDDPDLFGVSNEGELSFTSEVPKISQEEPNVAGEHQSTDSKYMETPVKKEPSDDLRELPVLDCGWIKPDICASNSAESEIKHDPKDVNTSLGEVANETSENETLGDFSEQIKGSDLDEKHRFTDKVITKEEKENIYEVCKSKDSRNADIMVGECQFAVPVPKPLCLLVPPLNLSGRQEDTILNTWMNGTICFLNEILLAFGNIETRRFFYQKQKTIKVFQKSLGLMIPYKYCKFHFNTLRGCERPLCKFAHVPEQGDEKVCMDVFKKYININELCLLQRAVNIFMEYYRKFPPGVYFDLQVLNDLLNSLLKHCLLKEVFQIVNLSIMVKMLPSLKILLNIFEYVATMKLRNAVPALIDIFCKLVEAGMVLDPEHFNYIVKLLYQVQASKQEITAVLEMKSRLQMRQFKKNWKCDLHSALNKLEHCKEKGDWTKLGKLYINVKMGCEKFADFQTFCACIAETLTKNYEDERPDIPFCEFAETVSKDPQNSKVDKGVLGRIGISAMCFYHKLLQWSKGRKVLEKLYELKIHFTSLKGLIGPEKLASRCQIVNVAAEIFLKSGSLDGAIWVMRESEWIINTPLWPCDRLDVLNRHNLLCTIAHEILAKSLYRQTFEVLQNLPGFQNSQETVEVSQYSLLFNKLLGSCIESSSLGMSSSVAEFMISKSIPIDFSFLRRLITSLGRSCLWLKARAHYKSALSLGCYPPLEGNLYRKLLLIPSYLSEIEMLLAIEIFMVSNASSIQSPGTSTQILQIVLKRCEDNQSRSSDDYQAAVERLIMAARISDPKLFVKHMTVNVNKEQVYSLEHCSALKWLKENMKWAGKVWLFSNH.

4 disordered regions span residues 1–135 (MRRP…PGLD), 322–341 (EESS…EKAD), 600–629 (ELSR…TGNK), and 891–920 (ISQE…EPSD). Over residues 31–40 (GAAGGCGPEA) the composition is skewed to gly residues. Positions 95–116 (SDPRGLEAAKEAELPLQTERHT) are enriched in basic and acidic residues. Positions 603 to 627 (RSGSEVISNTTEDTQLTSETQSLTG) are enriched in polar residues. Over residues 903 to 920 (QSTDSKYMETPVKKEPSD) the composition is skewed to basic and acidic residues.

It is found in the cytoplasm. It localises to the cytosol. Its function is as follows. Important for normal spermatogenesis and male fertility. Specifically required for progression to the post-meiotic stages of spermatocyte development. Seems to be necessary for normal expression levels of a number of testis-expressed gene transcripts, although its role in this process is unclear. This is Protein TOPAZ1 (TOPAZ1) from Gorilla gorilla gorilla (Western lowland gorilla).